The chain runs to 300 residues: uncharacterized protein (300 aa).

The HTH lysR-type domain maps to 10–67 (FDLNLLVIFECIYQHLSISKAAESLYITPSAVSQSLQRLRAQFNDPLFIRSGKGIAPT). Residues 27–46 (ISKAAESLYITPSAVSQSLQ) constitute a DNA-binding region (H-T-H motif).

This sequence belongs to the LysR transcriptional regulatory family.

This is an uncharacterized protein from Escherichia coli (strain K12).